Reading from the N-terminus, the 657-residue chain is N-acetylgalactosaminyltransferase 7 (657 aa).

The Cytoplasmic segment spans residues 1-6; sequence MRLKIG. Residues 7–29 traverse the membrane as a helical; Signal-anchor for type II membrane protein segment; sequence FILRSLLVVGSFLGLVVLWSSLS. The disordered stretch occupies residues 30 to 66; it reads SRPDDPSPLSRMREDRDVNNPLPNRGGNGLAPGDDRF. The Lumenal portion of the chain corresponds to 30-657; the sequence is SRPDDPSPLS…KWEMNNIHSV (628 aa). Cystine bridges form between C197/C435, C426/C507, C545/C562, C585/C600, and C625/C640. The catalytic subdomain A stretch occupies residues 206–317; sequence LLTSSVVIVF…VNWYAPLVAP (112 aa). D247 and R277 together coordinate substrate. 2 residues coordinate Mn(2+): D301 and H303. The catalytic subdomain B stretch occupies residues 381–443; sequence PYRSPAMAGG…PCSRVGHIYR (63 aa). W412 provides a ligand contact to substrate. H440 is a Mn(2+) binding site. R443 serves as a coordination point for substrate. One can recognise a Ricin B-type lectin domain in the interval 532 to 652; sequence VEWGEIRGLE…GKMTQKWEMN (121 aa).

This sequence belongs to the glycosyltransferase 2 family. GalNAc-T subfamily. Requires Mn(2+) as cofactor. Highly expressed in sublingual gland. Expressed at lower level in stomach, small intestiine and colon.

The protein resides in the golgi apparatus membrane. It carries out the reaction L-seryl-[protein] + UDP-N-acetyl-alpha-D-galactosamine = a 3-O-[N-acetyl-alpha-D-galactosaminyl]-L-seryl-[protein] + UDP + H(+). The catalysed reaction is L-threonyl-[protein] + UDP-N-acetyl-alpha-D-galactosamine = a 3-O-[N-acetyl-alpha-D-galactosaminyl]-L-threonyl-[protein] + UDP + H(+). Its pathway is protein modification; protein glycosylation. Its function is as follows. Glycopeptide transferase involved in O-linked oligosaccharide biosynthesis, which catalyzes the transfer of an N-acetyl-D-galactosamine residue to an already glycosylated peptide. In contrast to other proteins of the family, it does not act as a peptide transferase that transfers GalNAc onto serine or threonine residue on the protein receptor, but instead requires the prior addition of a GalNAc on a peptide before adding additional GalNAc moieties. Some peptide transferase activity is however not excluded, considering that its appropriate peptide substrate may remain unidentified. In Rattus norvegicus (Rat), this protein is N-acetylgalactosaminyltransferase 7 (Galnt7).